The chain runs to 172 residues: Protein LHCP TRANSLOCATION DEFECT (172 aa).

The transit peptide at 1 to 28 directs the protein to the chloroplast; the sequence is MASIPCTFQLSARASSASAAAAARRSPR. Residues 114 to 146 form an ANK repeat; that stretch reads PVDILLMLAASEGDKPKLEELLRAGAKYDVKDV.

The protein localises to the plastid. The protein resides in the chloroplast. In terms of biological role, involved in the import of light-harvesting complex proteins (LHCP) and subsequent routing of these proteins to the chloroplast signal recognition particle (SRP) pathway. In Oryza sativa subsp. indica (Rice), this protein is Protein LHCP TRANSLOCATION DEFECT (LTD).